A 262-amino-acid chain; its full sequence is Indole-3-glycerol phosphate synthase (262 aa).

It belongs to the TrpC family.

The catalysed reaction is 1-(2-carboxyphenylamino)-1-deoxy-D-ribulose 5-phosphate + H(+) = (1S,2R)-1-C-(indol-3-yl)glycerol 3-phosphate + CO2 + H2O. The protein operates within amino-acid biosynthesis; L-tryptophan biosynthesis; L-tryptophan from chorismate: step 4/5. In Dechloromonas aromatica (strain RCB), this protein is Indole-3-glycerol phosphate synthase.